A 347-amino-acid chain; its full sequence is Metacaspase-2 (347 aa).

The propeptide occupies 1–55 (MCSLITQLCDAGQLADYVGLGWLNAVSSQPYLVQALGLQPPPRRVDVDAAFRDAK). The tract at residues 1-70 (MCSLITQLCD…QPWVATPLPG (70 aa)) is regulates substrate access to the active site. The active site involves histidine 158. Positions 173, 189, and 190 each coordinate Ca(2+). Residue cysteine 213 is part of the active site. Aspartate 220 contacts Ca(2+).

The protein belongs to the peptidase C14B family. Monomer. In terms of processing, auto-proteolytic cleavage of the propeptide after Lys-55 and between the large and small subunits after Lys-268 is required for catalytic activity towards large protein substrates but is dispensable towards small oligopeptide substrates. After processing, the propeptide and the large and small subunits remain associated by non-covalent bonds. In vivo, the unprocessed enzyme appears to be the predominant form.

Its subcellular location is the recycling endosome. With respect to regulation, activated by Ca(2+). In response to calcium binding, the 280-loop, a disordered loop consisting of residues 269-275, undergoes a conformational change which stabilizes substrates in the active site. The binding to the substrate triggers the release of the N-terminal region resulting in the activation of the enzyme. Proteolytic cleavage is required for catalytic activity towards large protein substrates. In terms of biological role, cysteine protease that cleaves specifically after arginine or lysine residues. The chain is Metacaspase-2 from Trypanosoma brucei brucei (strain 927/4 GUTat10.1).